Consider the following 493-residue polypeptide: C2H2-type transcription factor ffmA (493 aa).

Low complexity predominate over residues 1-18 (MPMPQYTMQPQYPVSQPH). Disordered stretches follow at residues 1 to 50 (MPMP…SRYP), 68 to 140 (TTVG…YPDG), and 164 to 202 (EPPR…KNTT). Polar residues-rich tracts occupy residues 69 to 79 (TVGSLPPSTFL) and 192 to 202 (NGVNGTAKNTT). The segment at 212-234 (FPCPHCNKTYLHAKHLKRHLLRH) adopts a C2H2-type 1 zinc-finger fold. The segment at 240–265 (YMCVLCKDTFSRSDILKRHFQKCSIR) adopts a C2H2-type 2; degenerate zinc-finger fold. Polar residues-rich tracts occupy residues 288–307 (QAAA…TVPP) and 484–493 (ASTTLGGDGK). Disordered regions lie at residues 288–316 (QAAA…GATF) and 468–493 (TTTA…GDGK).

This sequence belongs to the krueppel C2H2-type zinc-finger protein family.

The protein resides in the nucleus. In terms of biological role, transcription factor that acts in coordination with atrR to regulate the expression of the ABC-type multidrug transporter abcG1 and thus plays a role in azole susceptibility. Regulates the expression of genes involved in fermentation. Is able to promote expression from the yeast FLO11 promoter. In Aspergillus fumigatus (strain CBS 144.89 / FGSC A1163 / CEA10) (Neosartorya fumigata), this protein is C2H2-type transcription factor ffmA.